We begin with the raw amino-acid sequence, 137 residues long: MAPKAADKKPASKAPATASKAPEKKDAGKKTAPSGDKKKRTKARKETYSSYIYKVLKQVHPDTGISNRAMSILNSFVNDIFERVATEASKLAAYNKKSTISSREIQTSVRLILPGELAKHAVSEGTKAVTKYSSSTK.

Basic and acidic residues predominate over residues methionine 1–proline 10. Positions methionine 1–lysine 45 are disordered. N6-acetyllysine; alternate occurs at positions 8 and 9. Residues lysine 8 and lysine 9 each participate in a glycyl lysine isopeptide (Lys-Gly) (interchain with G-Cter in SUMO); alternate cross-link. At serine 12 the chain carries Phosphoserine. The residue at position 13 (lysine 13) is an N6-acetyllysine. Lysine 24 is modified (N6-acetyllysine; alternate). Lysine 24 participates in a covalent cross-link: Glycyl lysine isopeptide (Lys-Gly) (interchain with G-Cter in SUMO); alternate. Lysine 25 participates in a covalent cross-link: Glycyl lysine isopeptide (Lys-Gly) (interchain with G-Cter in SUMO). Residue lysine 131 forms a Glycyl lysine isopeptide (Lys-Gly) (interchain with G-Cter in ubiquitin) linkage.

Belongs to the histone H2B family. In terms of assembly, the nucleosome is a histone octamer containing two molecules each of H2A, H2B, H3 and H4 assembled in one H3-H4 heterotetramer and two H2A-H2B heterodimers. The octamer wraps approximately 147 bp of DNA. In terms of processing, monoubiquitinated by the UBC2-BRE1 complex to form H2BK123ub1. H2BK123ub1 gives a specific tag for epigenetic transcriptional activation and is also prerequisite for H3K4me and H3K79me formation. H2BK123ub1 also modulates the formation of double-strand breaks during meiosis and is a prerequisite for DNA-damage checkpoint activation. Post-translationally, phosphorylated to form H2BS10ph during progression through meiotic prophase. May be correlated with chromosome condensation. Acetylated by GCN5 to form H2BK11ac and H2BK16ac. H2BK16ac can also be formed by ESA1. Acetylation of N-terminal lysines and particularly formation of H2BK11acK16ac has a positive effect on transcription. In terms of processing, sumoylation to form H2BK6su or H2BK7su, and probably also H2BK16su or H2BK17su, occurs preferentially near the telomeres and represses gene transcription.

Its subcellular location is the nucleus. The protein resides in the chromosome. Functionally, core component of nucleosome. Nucleosomes wrap and compact DNA into chromatin, limiting DNA accessibility to the cellular machineries which require DNA as a template. Histones thereby play a central role in transcription regulation, DNA repair, DNA replication and chromosomal stability. DNA accessibility is regulated via a complex set of post-translational modifications of histones, also called histone code, and nucleosome remodeling. In Chaetomium globosum (strain ATCC 6205 / CBS 148.51 / DSM 1962 / NBRC 6347 / NRRL 1970) (Soil fungus), this protein is Histone H2B (HTB1).